The chain runs to 1364 residues: MTTSKPRKPSKAKAAKAAKAAKAALEKISKPLSKTPPPFRNHIIDKKALKNLVAWSFKHHGTAVTSSMADDLKDLGFKYATQAAVSISVDDLKVPAAKKDLLGQAEEQITATEERYRLGEITEVERHTKVIDTWTETNERLVDAVKKNFDENAPLNSVWMMANSGARGNMSQVRQLVGMRGLMANPQGEIIDLPIRTNFREGLTVTEYVISSYGARKGLVDTALRTADSGYLTRRLVDVAQDVIVREDDCGTMRHIVVEAEDSKFAKRLVGRLTAAQVVSAEGEVLAERDTEIDPALSSKIEKAGITAVSIRSPLTCEANRSVCRKCYGWALAHNELVDLGEAVGIIAAQSIGEPGTQLTMRTFHTGGVSTAESGVVRSKVAGDVEFGSKARVRPYRTPHGVEAQQAEVDFTLTIKPSGKGRPQKIDITLGSLLFVDNGQAIESDVTVVQIAAGAVQKSVEKATKDVICDLAGQVHYEDKIQPREVTDRQGNITLKAQRLGRMWVLAGDVYNLPPNALPVVDGKSTVTEGQVLAEASQRSEFGGDVRLRDSIGDSREVQIVTTAMTLKDFKLLEESNHSGELWNLEAKDGTRYRLNTIPGSKIGNGEVIAELADDRFRTGTGGLVKFAPGLAIKKARSAKNGYEVNKGGTLLWVPQETHEINKDISLLMITDGQWIEAGTEVVKDIFSQTAGVVTVTQKNDILREIIVRGGDLRLISDNKALERFEGDGQMVNPGDDVAKGVSVDTMKFVQTVETPEGKGLLLRPVEEYTIPNEAQLPELSHLKQANGPHLGIKATQRLAFKDNELIKSVEGVELLKTQLLLETFDTTPQMTVDVERAPDKRAKTISRLRLVILESILVRRDTMSDSSHGSTHTDLQVEDGISVKAGDVVATTQILCKQEGVVQLPEATEAEPVRRLIVERPEDTTTISTSGKPSVAVGDRVVDGDLLASGQPSDCCGEVEAVDGSSVTLRLGRPYMVSPDSLLHVRDGDLVQRGDGLALLVFERQKTGDIVQGLPRIEELLEARRPRDSAILCRKPGTVEIKQGEDDDSLSVNVIESDDAIGEYPILLGRNVMVNDGQQVTAGELLTDGPINPHELLECFFEDFRSRKPLMDAAQEAIANLQHRLVTEVQNVYKSQGVSIDDKHIEVIVRQMTSKVRVEDAGDTTLLPGELIELRQVEDTNQAMAITGGAPSEFTPVLLGITKASLNTDSFISAASFQETTRVLTEAAIEGKSDWLRGLKENVIIGRLIPAGTGFSGFEEELQKEAGPHPDILSEDPAGYRRMQNLRPDYTVDMPPAASSSALLADPSDADLEATRTRHNIDPSASTNAAFTRPDVDNELKEEQVVDAEAVEGLQEEGLLSDD.

C250, C317, C324, and C327 together coordinate Zn(2+). Residues 1318–1342 (TRHNIDPSASTNAAFTRPDVDNELK) form a disordered region.

This sequence belongs to the RNA polymerase beta' chain family. RpoC2 subfamily. In terms of assembly, in cyanobacteria the RNAP catalytic core is composed of 2 alpha, 1 beta, 1 beta', 1 gamma and 1 omega subunit. When a sigma factor is associated with the core the holoenzyme is formed, which can initiate transcription. Zn(2+) serves as cofactor.

It catalyses the reaction RNA(n) + a ribonucleoside 5'-triphosphate = RNA(n+1) + diphosphate. DNA-dependent RNA polymerase catalyzes the transcription of DNA into RNA using the four ribonucleoside triphosphates as substrates. In Synechococcus sp. (strain CC9902), this protein is DNA-directed RNA polymerase subunit beta'.